The sequence spans 447 residues: Tubulin beta-1 chain (447 aa).

Gln-11, Glu-69, Ser-138, Gly-142, Thr-143, Gly-144, Asn-204, and Asn-226 together coordinate GTP. Mg(2+) is bound at residue Glu-69. The disordered stretch occupies residues Gln-424–Ala-447. Residues Thr-429–Ala-447 show a composition bias toward acidic residues.

The protein belongs to the tubulin family. Dimer of alpha and beta chains. A typical microtubule is a hollow water-filled tube with an outer diameter of 25 nm and an inner diameter of 15 nM. Alpha-beta heterodimers associate head-to-tail to form protofilaments running lengthwise along the microtubule wall with the beta-tubulin subunit facing the microtubule plus end conferring a structural polarity. Microtubules usually have 13 protofilaments but different protofilament numbers can be found in some organisms and specialized cells. Mg(2+) serves as cofactor.

It localises to the cytoplasm. The protein resides in the cytoskeleton. In terms of biological role, tubulin is the major constituent of microtubules, a cylinder consisting of laterally associated linear protofilaments composed of alpha- and beta-tubulin heterodimers. Microtubules grow by the addition of GTP-tubulin dimers to the microtubule end, where a stabilizing cap forms. Below the cap, tubulin dimers are in GDP-bound state, owing to GTPase activity of alpha-tubulin. This chain is Tubulin beta-1 chain (TUBB1), found in Cyanophora paradoxa.